The following is a 237-amino-acid chain: Zinc finger AN1 domain-containing stress-associated protein 14 (237 aa).

A disordered region spans residues 1–31 (MATKRKCPANGDDGGVADLEPVAGGSFASPP). The segment at 171–217 (QPEANRCATCRRKVGLTGFKCRCGGTFCGGHRYADEHGCGFDYKSSG) adopts an AN1-type zinc-finger fold. Zn(2+) contacts are provided by C177, C180, C191, C193, C198, H201, H207, and C209.

Its function is as follows. May be involved in environmental stress response. This Oryza sativa subsp. japonica (Rice) protein is Zinc finger AN1 domain-containing stress-associated protein 14 (SAP14).